The following is a 355-amino-acid chain: uncharacterized protein (355 aa).

Belongs to the serpin family. Poxviruses subfamily.

This is an uncharacterized protein from Vertebrata (FPV).